Here is a 259-residue protein sequence, read N- to C-terminus: Adenosylcobinamide-GDP ribazoletransferase (259 aa).

6 helical membrane passes run Ile27–Ile47, Phe51–Asn71, Val100–Ala120, Leu124–Ile144, Phe175–Ala195, and Val219–Ala239.

It belongs to the CobS family. It depends on Mg(2+) as a cofactor.

It localises to the cell membrane. It carries out the reaction alpha-ribazole + adenosylcob(III)inamide-GDP = adenosylcob(III)alamin + GMP + H(+). The enzyme catalyses alpha-ribazole 5'-phosphate + adenosylcob(III)inamide-GDP = adenosylcob(III)alamin 5'-phosphate + GMP + H(+). It participates in cofactor biosynthesis; adenosylcobalamin biosynthesis; adenosylcobalamin from cob(II)yrinate a,c-diamide: step 7/7. In terms of biological role, joins adenosylcobinamide-GDP and alpha-ribazole to generate adenosylcobalamin (Ado-cobalamin). Also synthesizes adenosylcobalamin 5'-phosphate from adenosylcobinamide-GDP and alpha-ribazole 5'-phosphate. This is Adenosylcobinamide-GDP ribazoletransferase from Thermoplasma volcanium (strain ATCC 51530 / DSM 4299 / JCM 9571 / NBRC 15438 / GSS1).